The primary structure comprises 103 residues: Phosphoribosyl-ATP pyrophosphatase (103 aa).

Residues 79–103 form a disordered region; the sequence is SVQAELERREGKLSTTRDRKEIDEL. Residues 83–103 are compositionally biased toward basic and acidic residues; that stretch reads ELERREGKLSTTRDRKEIDEL.

It belongs to the PRA-PH family.

It localises to the cytoplasm. The enzyme catalyses 1-(5-phospho-beta-D-ribosyl)-ATP + H2O = 1-(5-phospho-beta-D-ribosyl)-5'-AMP + diphosphate + H(+). It functions in the pathway amino-acid biosynthesis; L-histidine biosynthesis; L-histidine from 5-phospho-alpha-D-ribose 1-diphosphate: step 2/9. The polypeptide is Phosphoribosyl-ATP pyrophosphatase (Listeria welshimeri serovar 6b (strain ATCC 35897 / DSM 20650 / CCUG 15529 / CIP 8149 / NCTC 11857 / SLCC 5334 / V8)).